The following is a 470-amino-acid chain: Aminoacyl transferase sphA (470 aa).

Residues Ser-212, His-244, and Thr-272 each contribute to the pyridoxal 5'-phosphate site. At Lys-275 the chain carries N6-(pyridoxal phosphate)lysine.

The protein belongs to the class-II pyridoxal-phosphate-dependent aminotransferase family. BioF subfamily. In terms of assembly, homodimer. Pyridoxal 5'-phosphate serves as cofactor.

Its pathway is secondary metabolite biosynthesis. Its function is as follows. Aminoacyl transferase; part of the gene cluster that mediates the biosynthesis of sphingofungins, bioactive molecules acting as sphingolipid inhibitors via inhibiting serine palmitoyl transferase (SPT). Within the pathway, sphA transfers 2-methyl-aminomalonate and 2-hydroxymethyl-aminomalonate onto the sphB product 3-hydroxyoctadeca-4,10-dienoyl-ACP to produce the precursors of sphingofungins E and F. The substrate specificity of sphA using 2-methyl-aminomalonate and 2-hydroxymethyl-aminomalonate instread of aminomalonate is responsible for the biosynthesis of sphingofungins E and F but not B and C like in Aspergillus fumigatus. The PKS sphB does not contain any putative thioesterase domain for releasing the nascent polyketide chain and it has been suggested that aminoacyl transferases can facilitate the polyketide chain release. The protein is Aminoacyl transferase sphA of Byssochlamys spectabilis (Paecilomyces variotii).